A 773-amino-acid chain; its full sequence is Transducin-like enhancer protein 4 (773 aa).

Disordered regions lie at residues M1–Q22, H140–P162, and L182–L360. Residues M1–Q136 are q domain. Residues H137–S204 form a GP domain region. A compositionally biased stretch (basic and acidic residues) spans P183–I202. Residues K203–S212 are compositionally biased toward low complexity. Residues S205–P274 form a ccN domain region. Phosphoserine occurs at positions 208, 212, and 222. A compositionally biased stretch (basic and acidic residues) spans G215 to D252. K237 carries the post-translational modification N6-acetyllysine. A phosphoserine mark is found at S245, S250, S269, and S273. A compositionally biased stretch (basic and acidic residues) spans S273–A289. The interval R275 to H452 is SP domain. K281 is modified (N6-acetyllysine). Over residues P290–S305 the composition is skewed to low complexity. Position 292 is a phosphoserine (S292). Over residues T317–P328 the composition is skewed to polar residues. At T318 the chain carries Phosphothreonine. Phosphoserine is present on residues S321 and S323. Residues T325, T327, T334, and T340 each carry the phosphothreonine modification. S419 is modified (phosphoserine). WD repeat units lie at residues N485 to P523, N531 to K570, S575 to Q614, G617 to Q656, D658 to L697, L699 to Q738, and K740 to Y773.

This sequence belongs to the WD repeat Groucho/TLE family. As to quaternary structure, homooligomer and heterooligomer with other family members. Interacts with PAX5. Interacts with LEF1, TCF7, TCF7L1 and TCF7L2. Interacts with ZNF703; TLE4 may mediate ZNF703 transcriptional repression. Interacts with SIX3 and SIX6. Interacts with PAX2. Interacts with TLE1. In terms of processing, phosphorylated. PAX5 binding increases phosphorylation. Post-translationally, ubiquitinated by XIAP/BIRC4. In all tissues examined, mostly in brain, and muscle.

It is found in the nucleus. In terms of biological role, transcriptional corepressor that binds to a number of transcription factors. Inhibits the transcriptional activation mediated by PAX5, and by CTNNB1 and TCF family members in Wnt signaling. The effects of full-length TLE family members may be modulated by association with dominant-negative AES. Essential for the transcriptional repressor activity of SIX3 during retina and lens development and for SIX3 transcriptional auto-repression. Involved in transcriptional repression of GNRHR and enhances MSX1-mediated transcriptional repression of CGA/alpha-GSU. This is Transducin-like enhancer protein 4 (TLE4) from Homo sapiens (Human).